The primary structure comprises 85 residues: RNA-binding protein Hfq (85 aa).

One can recognise a Sm domain in the interval 11–71; that stretch reads DTFLNHVRKS…ISTIMPGHPV (61 aa).

The protein belongs to the Hfq family. Homohexamer.

Functionally, RNA chaperone that binds small regulatory RNA (sRNAs) and mRNAs to facilitate mRNA translational regulation in response to envelope stress, environmental stress and changes in metabolite concentrations. Also binds with high specificity to tRNAs. Seems to be involved in the regulation of NifA. The polypeptide is RNA-binding protein Hfq (Azorhizobium caulinodans (strain ATCC 43989 / DSM 5975 / JCM 20966 / LMG 6465 / NBRC 14845 / NCIMB 13405 / ORS 571)).